Consider the following 398-residue polypeptide: Cyclin-dependent kinase D-1 (398 aa).

Positions 11–291 constitute a Protein kinase domain; sequence YLKREVLGQG…IQQALKHRYF (281 aa). Residues 17-25 and Lys-40 contribute to the ATP site; that span reads LGQGTYGVV. Tyr-22 carries the phosphotyrosine modification. The active-site Proton acceptor is the Asp-133. A Phosphoserine modification is found at Ser-160. Thr-166 carries the phosphothreonine modification. Residues 296–318 are disordered; it reads SPTDPLKLPRPVSKQDAKSSDSK. Over residues 308–318 the composition is skewed to basic and acidic residues; it reads SKQDAKSSDSK.

Belongs to the protein kinase superfamily. CMGC Ser/Thr protein kinase family. CDC2/CDKX subfamily. Autophosphorylated. Expressed at low levels in suspension cell culture, but not in plant organs.

It localises to the nucleus. The enzyme catalyses L-seryl-[protein] + ATP = O-phospho-L-seryl-[protein] + ADP + H(+). It catalyses the reaction L-threonyl-[protein] + ATP = O-phospho-L-threonyl-[protein] + ADP + H(+). It carries out the reaction [DNA-directed RNA polymerase] + ATP = phospho-[DNA-directed RNA polymerase] + ADP + H(+). The sequence is that of Cyclin-dependent kinase D-1 (CDKD-1) from Arabidopsis thaliana (Mouse-ear cress).